We begin with the raw amino-acid sequence, 474 residues long: Ribulose bisphosphate carboxylase/oxygenase activase, chloroplastic (474 aa).

Residues 1–58 constitute a chloroplast transit peptide; the sequence is MAAAVSTVGAINRAPLSLNGSGSGAVSAPASTFLGKKVVTVSRFAQSNKKSNGSFKVL. Phosphothreonine; by CK2 is present on T78. Residue 165 to 172 coordinates ATP; sequence GGKGQGKS. T283 is modified (phosphothreonine).

It belongs to the RuBisCO activase family. Phosphorylated at Thr-78 by CK2.

The protein localises to the plastid. The protein resides in the chloroplast stroma. It is found in the chloroplast. Its subcellular location is the plastoglobule. Activation of RuBisCO (ribulose-1,5-bisphosphate carboxylase/oxygenase; EC 4.1.1.39) involves the ATP-dependent carboxylation of the epsilon-amino group of lysine leading to a carbamate structure. This chain is Ribulose bisphosphate carboxylase/oxygenase activase, chloroplastic (RCA), found in Arabidopsis thaliana (Mouse-ear cress).